Reading from the N-terminus, the 319-residue chain is Acetyl-coenzyme A carboxylase carboxyl transferase subunit alpha (319 aa).

A CoA carboxyltransferase C-terminal domain is found at 35–296; the sequence is NIDEEVHRLR…KAQLLADLAD (262 aa).

Belongs to the AccA family. As to quaternary structure, acetyl-CoA carboxylase is a heterohexamer composed of biotin carboxyl carrier protein (AccB), biotin carboxylase (AccC) and two subunits each of ACCase subunit alpha (AccA) and ACCase subunit beta (AccD).

The protein localises to the cytoplasm. The catalysed reaction is N(6)-carboxybiotinyl-L-lysyl-[protein] + acetyl-CoA = N(6)-biotinyl-L-lysyl-[protein] + malonyl-CoA. Its pathway is lipid metabolism; malonyl-CoA biosynthesis; malonyl-CoA from acetyl-CoA: step 1/1. Component of the acetyl coenzyme A carboxylase (ACC) complex. First, biotin carboxylase catalyzes the carboxylation of biotin on its carrier protein (BCCP) and then the CO(2) group is transferred by the carboxyltransferase to acetyl-CoA to form malonyl-CoA. This Shigella sonnei (strain Ss046) protein is Acetyl-coenzyme A carboxylase carboxyl transferase subunit alpha.